Consider the following 367-residue polypeptide: tRNA-specific 2-thiouridylase MnmA (367 aa).

Residues 12-19 and methionine 38 contribute to the ATP site; that span reads GMSGGVDS. The tract at residues 98-100 is interaction with target base in tRNA; it reads NPD. The active-site Nucleophile is the cysteine 103. A disulfide bridge links cysteine 103 with cysteine 200. Glycine 128 is an ATP binding site. The interaction with tRNA stretch occupies residues 150–152; the sequence is KDQ. The Cysteine persulfide intermediate role is filled by cysteine 200. The segment at 312–313 is interaction with tRNA; that stretch reads RY.

Belongs to the MnmA/TRMU family. Interacts with TusE.

The protein localises to the cytoplasm. The enzyme catalyses S-sulfanyl-L-cysteinyl-[protein] + uridine(34) in tRNA + AH2 + ATP = 2-thiouridine(34) in tRNA + L-cysteinyl-[protein] + A + AMP + diphosphate + H(+). In terms of biological role, catalyzes the 2-thiolation of uridine at the wobble position (U34) of tRNA(Lys), tRNA(Glu) and tRNA(Gln), leading to the formation of s(2)U34, the first step of tRNA-mnm(5)s(2)U34 synthesis. Sulfur is provided by IscS, via a sulfur-relay system. Binds ATP and its substrate tRNAs. The protein is tRNA-specific 2-thiouridylase MnmA of Proteus mirabilis (strain HI4320).